A 736-amino-acid polypeptide reads, in one-letter code: Na(+)/H(+) antiporter NhaA (736 aa).

The interval 1-387 (MNHSPQSARP…ICGYLLLRAA (387 aa)) is na(+)/H(+) antiporter NhaA. Helical transmembrane passes span 23-43 (AGGI…NSPF), 58-78 (LSLA…LVGL), 96-116 (MLPG…FAVL), 126-146 (GWAV…SLLG), 155-175 (VFLA…IAIF), 178-198 (AEIS…LFVM), 201-221 (MGVV…FFVF), 224-244 (GVHA…KPAP), 265-285 (VAFI…FKGL), 298-318 (ILLG…WLAI), 334-354 (LYGV…IGLL), and 367-387 (IGVL…LRAA). A peptidase S49 region spans residues 388 to 736 (RPDQSAANPL…EKAIWARYGL (349 aa)).

This sequence in the N-terminal section; belongs to the NhaA Na(+)/H(+) (TC 2.A.33) antiporter family. The protein in the C-terminal section; belongs to the peptidase S49 family.

It is found in the cell inner membrane. It catalyses the reaction Na(+)(in) + 2 H(+)(out) = Na(+)(out) + 2 H(+)(in). Na(+)/H(+) antiporter that extrudes sodium in exchange for external protons. This is Na(+)/H(+) antiporter NhaA from Brucella abortus (strain 2308).